A 471-amino-acid polypeptide reads, in one-letter code: ATP synthase subunit beta 1 (471 aa).

Glycine 157–threonine 164 contributes to the ATP binding site.

It belongs to the ATPase alpha/beta chains family. F-type ATPases have 2 components, CF(1) - the catalytic core - and CF(0) - the membrane proton channel. CF(1) has five subunits: alpha(3), beta(3), gamma(1), delta(1), epsilon(1). CF(0) has three main subunits: a(1), b(2) and c(9-12). The alpha and beta chains form an alternating ring which encloses part of the gamma chain. CF(1) is attached to CF(0) by a central stalk formed by the gamma and epsilon chains, while a peripheral stalk is formed by the delta and b chains.

It is found in the cell inner membrane. It carries out the reaction ATP + H2O + 4 H(+)(in) = ADP + phosphate + 5 H(+)(out). In terms of biological role, produces ATP from ADP in the presence of a proton gradient across the membrane. The catalytic sites are hosted primarily by the beta subunits. The protein is ATP synthase subunit beta 1 of Pelobacter propionicus (strain DSM 2379 / NBRC 103807 / OttBd1).